Here is a 156-residue protein sequence, read N- to C-terminus: CRIB domain-containing protein RIC11 (156 aa).

One can recognise a CRIB domain in the interval 26 to 39 (IGHPTEVKHVAHIG). A disordered region spans residues 87–156 (QDQLNISDRI…SMVSRLNSNA (70 aa)). The span at 109-120 (IHTKSKNRRKKP) shows a compositional bias: basic residues. Low complexity predominate over residues 121–142 (SSTSSPRSRPSPKSSRSMGLSK).

Functionally, functions as a downstream effector of Rho-related GTP binding proteins of the 'Rho of Plants' (ROPs) family. Participates in the propagation of ROP GTPase signals in specific cellular responses. The chain is CRIB domain-containing protein RIC11 (RIC11) from Arabidopsis thaliana (Mouse-ear cress).